The chain runs to 569 residues: Cryptochrome DASH, chloroplastic/mitochondrial (569 aa).

Residues 84-221 (GVTILWFRND…KLELIWGSTM (138 aa)) enclose the Photolyase/cryptochrome alpha/beta domain. FAD contacts are provided by residues tyrosine 316 and 329-333 (STKFS). Arginine 436 is a binding site for ATP. Aspartate 466 and aspartate 468 together coordinate FAD. Aspartate 485 contacts ATP. The tract at residues 541-569 (GNGPMAGGSKSGGGFRGSHSGRRSRHNGP) is disordered. Residues 544-556 (PMAGGSKSGGGFR) are compositionally biased toward gly residues. The segment covering 559 to 569 (HSGRRSRHNGP) has biased composition (basic residues).

This sequence belongs to the DNA photolyase class-1 family. In terms of assembly, homodimer. FAD serves as cofactor. It depends on (6R)-5,10-methylene-5,6,7,8-tetrahydrofolate as a cofactor.

It localises to the plastid. The protein localises to the chloroplast. It is found in the mitochondrion. In terms of biological role, may have a photoreceptor function. Binds ss- and ds-DNA in a sequence non-specific manner. Has a photolyase activity specific for cyclobutane pyrimidine dimers in ssDNA. This Arabidopsis thaliana (Mouse-ear cress) protein is Cryptochrome DASH, chloroplastic/mitochondrial (CRYD).